Consider the following 165-residue polypeptide: Large ribosomal subunit protein uL10 (165 aa).

Belongs to the universal ribosomal protein uL10 family. Part of the ribosomal stalk of the 50S ribosomal subunit. The N-terminus interacts with L11 and the large rRNA to form the base of the stalk. The C-terminus forms an elongated spine to which L12 dimers bind in a sequential fashion forming a multimeric L10(L12)X complex.

Its function is as follows. Forms part of the ribosomal stalk, playing a central role in the interaction of the ribosome with GTP-bound translation factors. This is Large ribosomal subunit protein uL10 from Shewanella halifaxensis (strain HAW-EB4).